The chain runs to 110 residues: NADH-quinone oxidoreductase subunit K (110 aa).

3 helical membrane passes run 13–33 (LNHYLILSSLVFTIGMFGLFM), 41–61 (ILMSIELMLLAVNINFVAFSV), and 73–93 (IIILTVAAAETAIGLAILLIY).

The protein belongs to the complex I subunit 4L family. As to quaternary structure, NDH-1 is composed of 14 different subunits. Subunits NuoA, H, J, K, L, M, N constitute the membrane sector of the complex.

It localises to the cell inner membrane. It catalyses the reaction a quinone + NADH + 5 H(+)(in) = a quinol + NAD(+) + 4 H(+)(out). Its function is as follows. NDH-1 shuttles electrons from NADH, via FMN and iron-sulfur (Fe-S) centers, to quinones in the respiratory chain. The immediate electron acceptor for the enzyme in this species is believed to be ubiquinone. Couples the redox reaction to proton translocation (for every two electrons transferred, four hydrogen ions are translocated across the cytoplasmic membrane), and thus conserves the redox energy in a proton gradient. The protein is NADH-quinone oxidoreductase subunit K of Rickettsia typhi (strain ATCC VR-144 / Wilmington).